We begin with the raw amino-acid sequence, 385 residues long: Cytochrome b (385 aa).

Residues 1 to 27 (MAFRKSNVYLSLVNSYIIDSPQPSSIN) are Mitochondrial matrix-facing. A ubiquinone is bound at residue tyrosine 16. Residues 28–51 (YWWNMGSLLGLCLVIQIVTGIFMA) traverse the membrane as a helical segment. At 52-74 (MHYSSNIELAFSSVEHIMRDVHN) the chain is on the mitochondrial intermembrane side. Residues 75-102 (GYILRYLHANGASFFFMVMFMHMAKGLY) traverse the membrane as a helical segment. 2 residues coordinate heme b: histidine 82 and histidine 96. Residues 103–110 (YGSYRSPR) lie on the Mitochondrial matrix side of the membrane. Residues 111–135 (VTLWNVGVIIFILTIATAFLGYCCV) form a helical membrane-spanning segment. At 136–172 (YGQMSHWGATVITNLFSAIPFVGNDIVSWLWGGFSVS) the chain is on the mitochondrial intermembrane side. The helical transmembrane segment at 173 to 204 (NPTIQRFFALHYLVPFIIAAMVIMHLMALHIH) threads the bilayer. The heme b site is built by histidine 183 and histidine 197. An a ubiquinone-binding site is contributed by histidine 202. Residues 205-223 (GSSNPLGITGNLDRIPMHS) lie on the Mitochondrial matrix side of the membrane. The helical transmembrane segment at 224–246 (YFIFKDLVTVFLFMLILALFVFY) threads the bilayer. Over 247-287 (SPNTLGHPDNYIPGNPLVTPASIVPEWYLLPFYAILRSIPD) the chain is Mitochondrial intermembrane. A helical transmembrane segment spans residues 288–308 (KLLGVITMFAAILVLLVLPFT). At 309-319 (DRSVVRGNTFK) the chain is on the mitochondrial matrix side. A helical transmembrane segment spans residues 320–340 (VLSKFFFFIFVFNFVLLGQIG). The Mitochondrial intermembrane segment spans residues 341–347 (ACHVEVP). A helical membrane pass occupies residues 348–364 (YVLMGQIATFIYFAYFL). Topologically, residues 365 to 385 (IIVPVISTIENVLFYIGRVNK) are mitochondrial matrix.

It belongs to the cytochrome b family. In terms of assembly, component of the ubiquinol-cytochrome c oxidoreductase (cytochrome b-c1 complex, complex III, CIII), a multisubunit enzyme composed of 10 subunits. The complex is composed of 3 respiratory subunits cytochrome b (COB), cytochrome c1 (CYT1) and Rieske protein (RIP1), 2 core protein subunits COR1 and QCR2, and 5 low-molecular weight protein subunits QCR6, QCR7, QCR8, QCR9 and QCR10. The complex exists as an obligatory dimer and forms supercomplexes (SCs) in the inner mitochondrial membrane with a monomer or a dimer of cytochrome c oxidase (complex IV, CIV), resulting in 2 different assemblies (supercomplexes III(2)IV and III(2)IV(2)). Requires heme b as cofactor.

The protein localises to the mitochondrion inner membrane. It catalyses the reaction a quinol + 2 Fe(III)-[cytochrome c](out) = a quinone + 2 Fe(II)-[cytochrome c](out) + 2 H(+)(out). In terms of biological role, component of the ubiquinol-cytochrome c oxidoreductase, a multisubunit transmembrane complex that is part of the mitochondrial electron transport chain which drives oxidative phosphorylation. The respiratory chain contains 3 multisubunit complexes succinate dehydrogenase (complex II, CII), ubiquinol-cytochrome c oxidoreductase (cytochrome b-c1 complex, complex III, CIII) and cytochrome c oxidase (complex IV, CIV), that cooperate to transfer electrons derived from NADH and succinate to molecular oxygen, creating an electrochemical gradient over the inner membrane that drives transmembrane transport and the ATP synthase. The cytochrome b-c1 complex catalyzes electron transfer from ubiquinol to cytochrome c, linking this redox reaction to translocation of protons across the mitochondrial inner membrane, with protons being carried across the membrane as hydrogens on the quinol. In the process called Q cycle, 2 protons are consumed from the matrix, 4 protons are released into the intermembrane space and 2 electrons are passed to cytochrome c. Cytochrome b is a catalytic core subunit containing 2 b-type hemes BL and BH topographically segregated in the quinone reduction (Qi) and quinol oxidation (Q0) sites on opposite sides of the membrane. The protein is Cytochrome b (COB) of Saccharomyces cerevisiae (strain ATCC 204508 / S288c) (Baker's yeast).